The following is a 444-amino-acid chain: C4-dicarboxylate transport protein (444 aa).

A run of 9 helical transmembrane segments spans residues 21–41 (HLYVQVLVAIAAGILLGHFYP), 57–77 (LVKMIIAPVIFLTVATGIAGM), 92–112 (IYFLTFSTLALIIGLIVANVV), 161–181 (GDILQVLFFSVLFGIALALVG), 201–221 (LVSILMKAAPIGAFGAMAFTI), 234–254 (LLIGTFYLTALLFVLVVLGAV), 320–340 (IYMTLAALFIAQATDIPLSLS), 345–365 (LLLVAMLSSKGAAGITGAGFI), and 368–388 (AATLSVVPAVPVAGMALILGI).

It belongs to the dicarboxylate/amino acid:cation symporter (DAACS) (TC 2.A.23) family.

The protein resides in the cell inner membrane. Functionally, responsible for the transport of dicarboxylates such as succinate, fumarate, and malate from the periplasm across the membrane. The sequence is that of C4-dicarboxylate transport protein from Brucella anthropi (strain ATCC 49188 / DSM 6882 / CCUG 24695 / JCM 21032 / LMG 3331 / NBRC 15819 / NCTC 12168 / Alc 37) (Ochrobactrum anthropi).